Reading from the N-terminus, the 359-residue chain is DNA replication and repair protein RecF (359 aa).

Residue 30–37 coordinates ATP; it reads GPNGSGKT.

Belongs to the RecF family.

It is found in the cytoplasm. The RecF protein is involved in DNA metabolism; it is required for DNA replication and normal SOS inducibility. RecF binds preferentially to single-stranded, linear DNA. It also seems to bind ATP. The sequence is that of DNA replication and repair protein RecF from Aliivibrio salmonicida (strain LFI1238) (Vibrio salmonicida (strain LFI1238)).